The chain runs to 366 residues: Ribosomal RNA large subunit methyltransferase M (366 aa).

S-adenosyl-L-methionine-binding positions include S188, 221–224 (CPGG), D240, D260, and D277. The active-site Proton acceptor is K306.

The protein belongs to the class I-like SAM-binding methyltransferase superfamily. RNA methyltransferase RlmE family. RlmM subfamily. As to quaternary structure, monomer.

The protein resides in the cytoplasm. It carries out the reaction cytidine(2498) in 23S rRNA + S-adenosyl-L-methionine = 2'-O-methylcytidine(2498) in 23S rRNA + S-adenosyl-L-homocysteine + H(+). Catalyzes the 2'-O-methylation at nucleotide C2498 in 23S rRNA. The chain is Ribosomal RNA large subunit methyltransferase M from Escherichia coli O45:K1 (strain S88 / ExPEC).